A 453-amino-acid polypeptide reads, in one-letter code: GTPase Der (453 aa).

EngA-type G domains lie at 4–169 and 177–352; these read PIVA…PPTT and IKIA…EEHK. Residues 10–17, 57–61, 120–123, 183–190, 230–234, and 295–298 contribute to the GTP site; these read GRPNVGKS, DTGGL, NKCE, DTAGI, and NKWD. One can recognise a KH-like domain in the interval 353 to 438; it reads RRVSTSVINE…PIRLLWRSKK (86 aa).

Belongs to the TRAFAC class TrmE-Era-EngA-EngB-Septin-like GTPase superfamily. EngA (Der) GTPase family. Associates with the 50S ribosomal subunit.

Functionally, GTPase that plays an essential role in the late steps of ribosome biogenesis. The protein is GTPase Der of Trichormus variabilis (strain ATCC 29413 / PCC 7937) (Anabaena variabilis).